The sequence spans 349 residues: N-acetyl-gamma-glutamyl-phosphate reductase (349 aa).

Cys149 is an active-site residue.

It belongs to the NAGSA dehydrogenase family. Type 1 subfamily.

The protein localises to the cytoplasm. The enzyme catalyses N-acetyl-L-glutamate 5-semialdehyde + phosphate + NADP(+) = N-acetyl-L-glutamyl 5-phosphate + NADPH + H(+). It participates in amino-acid biosynthesis; L-arginine biosynthesis; N(2)-acetyl-L-ornithine from L-glutamate: step 3/4. Functionally, catalyzes the NADPH-dependent reduction of N-acetyl-5-glutamyl phosphate to yield N-acetyl-L-glutamate 5-semialdehyde. This Acinetobacter baylyi (strain ATCC 33305 / BD413 / ADP1) protein is N-acetyl-gamma-glutamyl-phosphate reductase.